Reading from the N-terminus, the 445-residue chain is POU domain, class 3, transcription factor 2 (445 aa).

Disordered regions lie at residues 64 to 173 (ALSH…WRSA) and 203 to 269 (LGAG…TPTS). Over residues 67–90 (HGGGGGGGGGGGGGGGGGGGGGDG) the composition is skewed to gly residues. 2 stretches are compositionally biased toward low complexity: residues 125–151 (QQQHQQQQQQQQQQQQQQQQQQQQQQQ) and 163–173 (HHPGPGAWRSA). Residues 217–226 (LRDAHDEPHH) are compositionally biased toward basic and acidic residues. Over residues 227 to 237 (ADHHPHPHSHP) the composition is skewed to basic residues. Positions 239-253 (QQPPPPPPPQGPPGH) are enriched in pro residues. One can recognise a POU-specific domain in the interval 264 to 338 (EDTPTSDDLE…LLNKWLEEAD (75 aa)). The residue at position 343 (S343) is a Phosphoserine. The homeobox DNA-binding region spans 356 to 415 (KRKKRTSIEVSVKGALESHFLKCPKPSAQEITSLADSLQLEKEVVRVWFCNRRQKEKRMT). The tract at residues 411-445 (EKRMTPPGGTLPGAEDVYGGSRDTPPHHGVQTPVQ) is disordered.

Belongs to the POU transcription factor family. Class-3 subfamily. Interacts with PQBP1. Interaction with ISL1. Expressed specifically in the neuroectodermal cell lineage.

The protein resides in the nucleus. Transcription factor that plays a key role in neuronal differentiation. Binds preferentially to the recognition sequence which consists of two distinct half-sites, ('GCAT') and ('TAAT'), separated by a non-conserved spacer region of 0, 2, or 3 nucleotides. Acts as a transcriptional activator when binding cooperatively with SOX4, SOX11, or SOX12 to gene promoters. The combination of three transcription factors, ASCL1, POU3F2/BRN2 and MYT1L, is sufficient to reprogram fibroblasts and other somatic cells into induced neuronal (iN) cells in vitro. Acts downstream of ASCL1, accessing chromatin that has been opened by ASCL1, and promotes transcription of neuronal genes. The sequence is that of POU domain, class 3, transcription factor 2 (Pou3f2) from Mus musculus (Mouse).